Here is a 379-residue protein sequence, read N- to C-terminus: Lipid-A-disaccharide synthase (379 aa).

It belongs to the LpxB family.

The catalysed reaction is a lipid X + a UDP-2-N,3-O-bis[(3R)-3-hydroxyacyl]-alpha-D-glucosamine = a lipid A disaccharide + UDP + H(+). The protein operates within bacterial outer membrane biogenesis; LPS lipid A biosynthesis. In terms of biological role, condensation of UDP-2,3-diacylglucosamine and 2,3-diacylglucosamine-1-phosphate to form lipid A disaccharide, a precursor of lipid A, a phosphorylated glycolipid that anchors the lipopolysaccharide to the outer membrane of the cell. This is Lipid-A-disaccharide synthase from Vibrio campbellii (strain ATCC BAA-1116).